Consider the following 274-residue polypeptide: DegV domain-containing protein Cgl2349/cg2579 (274 aa).

Residues 3-259 form the DegV domain; it reads VRVIVDSSAC…PGAVSVSAVF (257 aa). Hexadecanoate is bound by residues Thr-39 and Ser-73.

In terms of assembly, monomer.

Its function is as follows. Binds long-chain fatty acids, such as palmitate, and may play a role in lipid transport or fatty acid metabolism. This chain is DegV domain-containing protein Cgl2349/cg2579, found in Corynebacterium glutamicum (strain ATCC 13032 / DSM 20300 / JCM 1318 / BCRC 11384 / CCUG 27702 / LMG 3730 / NBRC 12168 / NCIMB 10025 / NRRL B-2784 / 534).